The chain runs to 367 residues: Anhydro-N-acetylmuramic acid kinase (367 aa).

13–20 (GTSMDGAD) lines the ATP pocket.

Belongs to the anhydro-N-acetylmuramic acid kinase family.

It catalyses the reaction 1,6-anhydro-N-acetyl-beta-muramate + ATP + H2O = N-acetyl-D-muramate 6-phosphate + ADP + H(+). It participates in amino-sugar metabolism; 1,6-anhydro-N-acetylmuramate degradation. Its pathway is cell wall biogenesis; peptidoglycan recycling. Catalyzes the specific phosphorylation of 1,6-anhydro-N-acetylmuramic acid (anhMurNAc) with the simultaneous cleavage of the 1,6-anhydro ring, generating MurNAc-6-P. Is required for the utilization of anhMurNAc either imported from the medium or derived from its own cell wall murein, and thus plays a role in cell wall recycling. The chain is Anhydro-N-acetylmuramic acid kinase from Neisseria gonorrhoeae (strain ATCC 700825 / FA 1090).